A 112-amino-acid chain; its full sequence is DNA-binding protein Memar_1972 (112 aa).

Residues 14–35 (MEQMQRQAMDQQGMEEEAARQQ) form a disordered region.

The protein belongs to the PDCD5 family.

This Methanoculleus marisnigri (strain ATCC 35101 / DSM 1498 / JR1) protein is DNA-binding protein Memar_1972.